Consider the following 145-residue polypeptide: UPF0735 ACT domain-containing protein CKL_0858 (145 aa).

The 76-residue stretch at 69–144 folds into the ACT domain; sequence TLGLTLAHKA…SVIKVNLAAV (76 aa).

This sequence belongs to the UPF0735 family.

This Clostridium kluyveri (strain ATCC 8527 / DSM 555 / NBRC 12016 / NCIMB 10680 / K1) protein is UPF0735 ACT domain-containing protein CKL_0858.